A 380-amino-acid chain; its full sequence is Cytochrome b (380 aa).

4 helical membrane passes run 34–54 (FGSL…FLAM), 78–99 (WLLR…YFHI), 114–134 (WNIG…GYVL), and 179–199 (FFTF…IHLL). Residues H84 and H98 each contribute to the heme b site. Positions 183 and 197 each coordinate heme b. Residue H202 coordinates a ubiquinone. 4 helical membrane passes run 227–247 (YKDL…STFA), 289–309 (LGGV…PIIH), 321–341 (IAKT…WIGG), and 348–368 (FITI…LLIP).

This sequence belongs to the cytochrome b family. The cytochrome bc1 complex contains 3 respiratory subunits (MT-CYB, CYC1 and UQCRFS1), 2 core proteins (UQCRC1 and UQCRC2) and probably 6 low-molecular weight proteins. Requires heme b as cofactor.

Its subcellular location is the mitochondrion inner membrane. In terms of biological role, component of the ubiquinol-cytochrome c reductase complex (complex III or cytochrome b-c1 complex) that is part of the mitochondrial respiratory chain. The b-c1 complex mediates electron transfer from ubiquinol to cytochrome c. Contributes to the generation of a proton gradient across the mitochondrial membrane that is then used for ATP synthesis. The chain is Cytochrome b (mt-cyb) from Pelophylax nigromaculatus (Black-spotted frog).